We begin with the raw amino-acid sequence, 529 residues long: O-acetylstemmadenine oxidase (529 aa).

Positions 1 to 23 are cleaved as a signal peptide; it reads MIKKVPIVLSIFCFLLLLSSSHG. Cysteines 32 and 92 form a disulfide. N-linked (GlcNAc...) asparagine glycosylation is present at Asn-52. Residues 70-244 enclose the FAD-binding PCMH-type domain; that stretch reads KSPKPLAIIT…VSWKVKLVKV (175 aa). FAD is bound by residues 102–108, Ser-113, 168–169, 173–177, and Phe-183; these read IRSGGAD, VS, and GIGGH. Asn-293 carries an N-linked (GlcNAc...) asparagine glycan. An FAD-binding site is contributed by Trp-465.

The protein belongs to the oxygen-dependent FAD-linked oxidoreductase family. FAD serves as cofactor. Expressed in leaf epidermis.

The protein localises to the endoplasmic reticulum. The protein resides in the vacuole. Its subcellular location is the vesicle. It catalyses the reaction O-acetyl-15alpha-stemmadenine + O2 = precondylocarpine acetate + H2O2. It functions in the pathway alkaloid biosynthesis. Its function is as follows. Component of the seco-iridoid and derivatives monoterpenoid indole alkaloids (MIAs, e.g. vinblastine, catharanthine, tabersonine, vincadifformine, vindoline, vincristine, quinine and strychnine) biosynthesis pathway. Converts O-acetylstemmadenine (OAS) to reactive acetylated intermediates, likely dihydroprecondylocarpine acetate. The chain is O-acetylstemmadenine oxidase from Catharanthus roseus (Madagascar periwinkle).